We begin with the raw amino-acid sequence, 313 residues long: Homoserine O-acetyltransferase (313 aa).

The active-site Acyl-thioester intermediate is Cys142. The substrate site is built by Lys163 and Ser191. His234 functions as the Proton acceptor in the catalytic mechanism. Glu236 is an active-site residue. A substrate-binding site is contributed by Arg248.

The protein belongs to the MetA family.

It localises to the cytoplasm. The enzyme catalyses L-homoserine + acetyl-CoA = O-acetyl-L-homoserine + CoA. The protein operates within amino-acid biosynthesis; L-methionine biosynthesis via de novo pathway; O-acetyl-L-homoserine from L-homoserine: step 1/1. Its function is as follows. Transfers an acetyl group from acetyl-CoA to L-homoserine, forming acetyl-L-homoserine. The chain is Homoserine O-acetyltransferase from Streptococcus gordonii (strain Challis / ATCC 35105 / BCRC 15272 / CH1 / DL1 / V288).